A 372-amino-acid polypeptide reads, in one-letter code: Molybdopterin synthase catalytic subunit (372 aa).

Substrate is bound by residues 101-102 (HR), lysine 117, and 124-126 (KKE).

It belongs to the MoaE family. MOCS2B subfamily. In terms of assembly, heterotetramer; composed of 2 small (Mocs2A) and 2 large (Mocs2B) subunits.

Its subcellular location is the cytoplasm. It carries out the reaction 2 [molybdopterin-synthase sulfur-carrier protein]-C-terminal-Gly-aminoethanethioate + cyclic pyranopterin phosphate + H2O = molybdopterin + 2 [molybdopterin-synthase sulfur-carrier protein]-C-terminal Gly-Gly + 2 H(+). It functions in the pathway cofactor biosynthesis; molybdopterin biosynthesis. Catalytic subunit of the molybdopterin synthase complex, a complex that catalyzes the conversion of precursor Z into molybdopterin. Acts by mediating the incorporation of 2 sulfur atoms from thiocarboxylated Mocs2A into precursor Z to generate a dithiolene group. This Drosophila willistoni (Fruit fly) protein is Molybdopterin synthase catalytic subunit.